An 800-amino-acid chain; its full sequence is DNA topoisomerase 4 subunit A (800 aa).

The 465-residue stretch at 31–495 (LPDVRDGLKP…EIEEIKIDKE (465 aa)) folds into the Topo IIA-type catalytic domain. The O-(5'-phospho-DNA)-tyrosine intermediate role is filled by Y119.

The protein belongs to the type II topoisomerase GyrA/ParC subunit family. ParC type 2 subfamily. In terms of assembly, heterotetramer composed of ParC and ParE.

It localises to the cell membrane. It carries out the reaction ATP-dependent breakage, passage and rejoining of double-stranded DNA.. Its function is as follows. Topoisomerase IV is essential for chromosome segregation. It relaxes supercoiled DNA. Performs the decatenation events required during the replication of a circular DNA molecule. The sequence is that of DNA topoisomerase 4 subunit A from Staphylococcus aureus (strain MW2).